We begin with the raw amino-acid sequence, 928 residues long: Neuropilin-1 (928 aa).

An N-terminal signal peptide occupies residues 1-21 (MLLRLLSCCCWLLCSLRSSWA). Topologically, residues 22 to 860 (SRNDKCGDTI…PGNVLKTLDP (839 aa)) are extracellular. 3 disulfide bridges follow: Cys-27–Cys-54, Cys-82–Cys-104, and Cys-147–Cys-173. CUB domains follow at residues 27 to 141 (CGDT…YEVF) and 147 to 265 (CSRN…FSVV). Residue Asn-150 is glycosylated (N-linked (GlcNAc...) asparagine). 3 residues coordinate Ca(2+): Glu-195, Asp-209, and Asp-250. An intrachain disulfide couples Cys-206 to Cys-228. 3 N-linked (GlcNAc...) asparagine glycosylation sites follow: Asn-261, Asn-300, and Asn-523. 2 disulfides stabilise this stretch: Cys-275/Cys-424 and Cys-431/Cys-584. F5/8 type C domains lie at 275-424 (CKEA…LYGC) and 431-584 (CSRM…LLGC). Ser-613 carries an O-linked (Xyl...) (chondroitin sulfate) serine; alternate glycan. The O-linked (Xyl...) (heparan sulfate) serine; alternate glycan is linked to Ser-613. A disordered region spans residues 624–645 (GATGQSTETPTVEASPEEPDMT). Polar residues predominate over residues 625–635 (ATGQSTETPTV). The region spanning 646-812 (HSDLDCKFGW…NHISPSQCRA (167 aa)) is the MAM domain. A glycan (O-linked (Xyl...) (chondroitin sulfate) serine) is linked at Ser-834. N-linked (GlcNAc...) asparagine glycosylation is present at Asn-844. Residues 861-883 (ILITIIAMSALGVLLGAICGVVL) traverse the membrane as a helical segment. The Cytoplasmic portion of the chain corresponds to 884 to 928 (YCACWHNGMSERNLSALENYNFELVDGVKLKKDKLNTQNSYSEAS).

It belongs to the neuropilin family. As to quaternary structure, homodimer, and heterodimer. As to expression, retinal ganglion cells and visual center neurons.

The protein resides in the mitochondrion membrane. The protein localises to the cell membrane. In terms of biological role, receptor involved in the development of the cardiovascular system, in angiogenesis, in the formation of certain neuronal circuits and in organogenesis outside the nervous system. Mediates the chemorepulsant activity of semaphorins. Binding to VEGFA initiates a signaling pathway needed for motor neuron axon guidance and cell body migration, including for the caudal migration of facial motor neurons from rhombomere 4 to rhombomere 6 during embryonic development. Regulates mitochondrial iron transport via interaction. This Xenopus laevis (African clawed frog) protein is Neuropilin-1 (nrp1).